Consider the following 222-residue polypeptide: 7-cyano-7-deazaguanine synthase (222 aa).

14–24 lines the ATP pocket; the sequence is FSGGQDSTTCL. The Zn(2+) site is built by Cys190, Cys199, Cys202, and Cys205.

This sequence belongs to the QueC family. Homodimer. It depends on Zn(2+) as a cofactor.

The enzyme catalyses 7-carboxy-7-deazaguanine + NH4(+) + ATP = 7-cyano-7-deazaguanine + ADP + phosphate + H2O + H(+). The protein operates within purine metabolism; 7-cyano-7-deazaguanine biosynthesis. In terms of biological role, catalyzes the ATP-dependent conversion of 7-carboxy-7-deazaguanine (CDG) to 7-cyano-7-deazaguanine (preQ(0)). This Staphylococcus aureus (strain bovine RF122 / ET3-1) protein is 7-cyano-7-deazaguanine synthase.